A 173-amino-acid polypeptide reads, in one-letter code: Photosystem I reaction center subunit XI (173 aa).

Transmembrane regions (helical) follow at residues 92–112 (LAGL…LSLY) and 148–168 (LIGG…LGII).

Belongs to the PsaL family.

The protein resides in the cellular thylakoid membrane. This is Photosystem I reaction center subunit XI from Nostoc punctiforme (strain ATCC 29133 / PCC 73102).